The primary structure comprises 232 residues: Octanoyltransferase (232 aa).

The 188-residue stretch at 32 to 219 folds into the BPL/LPL catalytic domain; sequence DTIYDTLILL…SFMVFNFSSC (188 aa). Substrate contacts are provided by residues 77-84, 140-142, and 153-155; these read RGGDITYH, AIG, and GFA. Cys-171 serves as the catalytic Acyl-thioester intermediate.

This sequence belongs to the LipB family.

Its subcellular location is the cytoplasm. It carries out the reaction octanoyl-[ACP] + L-lysyl-[protein] = N(6)-octanoyl-L-lysyl-[protein] + holo-[ACP] + H(+). It participates in protein modification; protein lipoylation via endogenous pathway; protein N(6)-(lipoyl)lysine from octanoyl-[acyl-carrier-protein]: step 1/2. Functionally, catalyzes the transfer of endogenously produced octanoic acid from octanoyl-acyl-carrier-protein onto the lipoyl domains of lipoate-dependent enzymes. Lipoyl-ACP can also act as a substrate although octanoyl-ACP is likely to be the physiological substrate. In Dictyoglomus thermophilum (strain ATCC 35947 / DSM 3960 / H-6-12), this protein is Octanoyltransferase.